A 1358-amino-acid polypeptide reads, in one-letter code: Phosphoribosylformylglycinamidine synthase (1358 aa).

Threonine 2 is modified (N-acetylthreonine). The tract at residues 339-363 (AVSPFPGAATGSGGEIRDEGATGRG) is disordered. Residues 345 to 356 (GAATGSGGEIRD), 424 to 426 (NGY), and alanine 719 each bind ATP. Mg(2+) contacts are provided by aspartate 720, glutamate 762, asparagine 766, and aspartate 930. Serine 932 serves as a coordination point for ATP. Positions 1093–1358 (VAILREQGVN…LFRSARRWVG (266 aa)) constitute a Glutamine amidotransferase type-1 domain. Catalysis depends on cysteine 1187, which acts as the Nucleophile. Residues histidine 1319 and glutamate 1321 contribute to the active site.

This sequence in the N-terminal section; belongs to the FGAMS family.

It localises to the cytoplasm. The enzyme catalyses N(2)-formyl-N(1)-(5-phospho-beta-D-ribosyl)glycinamide + L-glutamine + ATP + H2O = 2-formamido-N(1)-(5-O-phospho-beta-D-ribosyl)acetamidine + L-glutamate + ADP + phosphate + H(+). It functions in the pathway purine metabolism; IMP biosynthesis via de novo pathway; 5-amino-1-(5-phospho-D-ribosyl)imidazole from N(2)-formyl-N(1)-(5-phospho-D-ribosyl)glycinamide: step 1/2. Functionally, phosphoribosylformylglycinamidine synthase involved in the purines biosynthetic pathway. Catalyzes the ATP-dependent conversion of formylglycinamide ribonucleotide (FGAR) and glutamine to yield formylglycinamidine ribonucleotide (FGAM) and glutamate. The chain is Phosphoribosylformylglycinamidine synthase (ADE6) from Saccharomyces cerevisiae (strain ATCC 204508 / S288c) (Baker's yeast).